The sequence spans 295 residues: Hepatic leukemia factor (295 aa).

Over residues 34–52 (LHPEDAFSKDRDKGKKLDD) the composition is skewed to basic and acidic residues. Disordered regions lie at residues 34–69 (LHPE…GPTL) and 93–160 (SENG…NRNT). A bZIP domain is found at 225–288 (DDKYWARRRK…GKCKNILAKY (64 aa)). The basic motif stretch occupies residues 227 to 247 (KYWARRRKNNMAAKRSRDARR). Residues 248–255 (LKENQIAI) form a leucine-zipper region.

Belongs to the bZIP family. PAR subfamily. Binds DNA specifically as homodimer or heterodimer with other PAR factors. In terms of tissue distribution, isoform HLF43 is abundant in brain, liver and kidney. Isoform HLF36 is expressed only in the liver. Both isoforms accumulate in the liver with different circadian amplitudes. Isoform HLF36 reaches peak expression levels between 8 and 12 p.m. Isoform HLF43 displays a more pronounced fluctuation through the day.

The protein localises to the nucleus. The chain is Hepatic leukemia factor (Hlf) from Rattus norvegicus (Rat).